The sequence spans 294 residues: UDP-3-O-acyl-N-acetylglucosamine deacetylase (294 aa).

Residues His75, His232, and Asp236 each coordinate Zn(2+). Catalysis depends on His259, which acts as the Proton donor.

It belongs to the LpxC family. Zn(2+) serves as cofactor.

The enzyme catalyses a UDP-3-O-[(3R)-3-hydroxyacyl]-N-acetyl-alpha-D-glucosamine + H2O = a UDP-3-O-[(3R)-3-hydroxyacyl]-alpha-D-glucosamine + acetate. The protein operates within glycolipid biosynthesis; lipid IV(A) biosynthesis; lipid IV(A) from (3R)-3-hydroxytetradecanoyl-[acyl-carrier-protein] and UDP-N-acetyl-alpha-D-glucosamine: step 2/6. In terms of biological role, catalyzes the hydrolysis of UDP-3-O-myristoyl-N-acetylglucosamine to form UDP-3-O-myristoylglucosamine and acetate, the committed step in lipid A biosynthesis. In Campylobacter lari (strain RM2100 / D67 / ATCC BAA-1060), this protein is UDP-3-O-acyl-N-acetylglucosamine deacetylase.